A 494-amino-acid chain; its full sequence is Cytochrome P450 2G1 (494 aa).

Cysteine 439 serves as a coordination point for heme.

This sequence belongs to the cytochrome P450 family. It depends on heme as a cofactor. As to expression, olfactory epithelium.

Its subcellular location is the endoplasmic reticulum membrane. It is found in the microsome membrane. The catalysed reaction is an organic molecule + reduced [NADPH--hemoprotein reductase] + O2 = an alcohol + oxidized [NADPH--hemoprotein reductase] + H2O + H(+). Its function is as follows. Cytochromes P450 are a group of heme-thiolate monooxygenases. This isozyme seems to be implicated in olfaction. The polypeptide is Cytochrome P450 2G1 (CYP2G1) (Oryctolagus cuniculus (Rabbit)).